A 575-amino-acid polypeptide reads, in one-letter code: Potassium-transporting ATPase potassium-binding subunit (575 aa).

A run of 12 helical transmembrane segments spans residues 3–23 (FEGV…VPFF), 69–89 (AVLA…LLQG), 136–156 (CFQF…IAFI), 178–198 (ILMP…VPQS), 266–286 (LLEI…FGVL), 293–313 (GWVL…VAAL), 340–360 (FGWA…TGAV), 367–387 (LTPL…IWGG), 391–411 (GIAY…LMVG), 431–451 (IIFL…LAIP), 498–518 (VVLL…AGGL), and 543–563 (AGTI…LGPI).

Belongs to the KdpA family. The system is composed of three essential subunits: KdpA, KdpB and KdpC.

It localises to the cell inner membrane. In terms of biological role, part of the high-affinity ATP-driven potassium transport (or Kdp) system, which catalyzes the hydrolysis of ATP coupled with the electrogenic transport of potassium into the cytoplasm. This subunit binds the periplasmic potassium ions and delivers the ions to the membrane domain of KdpB through an intramembrane tunnel. In Gloeobacter violaceus (strain ATCC 29082 / PCC 7421), this protein is Potassium-transporting ATPase potassium-binding subunit.